The primary structure comprises 406 residues: Prenyltransferase phqJ (406 aa).

Positions 1 to 19 are enriched in polar residues; it reads MTVSTESNFPHGASTQKPQ. Residues 1–23 are disordered; the sequence is MTVSTESNFPHGASTQKPQSAEP. Glu99 lines the brevianamide F pocket. 3 residues coordinate dimethylallyl diphosphate: Arg113, Lys200, and Tyr202. Tyr204 serves as a coordination point for brevianamide F. Residues Lys269, Tyr271, and Tyr340 each coordinate dimethylallyl diphosphate.

The protein belongs to the tryptophan dimethylallyltransferase family.

It functions in the pathway alkaloid biosynthesis. Prenyltransferase; part of the gene cluster that mediates the biosynthesis of paraherquamide, a fungal indole alkaloid that belongs to a family of natural products containing a characteristic bicyclo[2.2.2]diazaoctane core. The first steps in the biosynthesis of paraherquamide is the production of the beta-methyl-proline precursor from L-isoleucine. They require oxidation of a terminally hydroxylated L-isoleucine to the corresponding aldehyde by enzymes which have still to be identified. Spontaneous cyclization and dehydration would yield the 4-methyl pyrolline-5-carboxylic acid, which is then reduced by the pyrroline-5-carboxylate reductase phqD leading to the beta-methyl-proline precursor. The next step of paraherquamide biosynthesis involves coupling of beta-methyl-proline and L-tryptophan by the bimodular NRPS phqB, to produce a monooxopiperazine intermediate. The reductase (R) domain of phqB utilizes NADPH for hydride transfer to reduce the thioester bond of the T domain-tethered linear dipeptide to a hemithioaminal intermediate, which spontaneously cleaves the C-S bond to release the aldehyde product. This compound undergoes spontaneous cyclization and dehydration to give a dienamine which is reverse prenylated at C-2 by the reverse prenyltransferase phqJ. The other prenyltransferase present in the cluster, phqI may be a redundant gene in the pathway. During biosynthetic assembly, the key step to produce the polycyclic core is catalyzed by the bifunctional reductase and intramolecular [4+2] Diels-Alderase, phqE, resulting in formation of the [2.2.2] diazaoctane intermediate preparaherquamide. Following formation of preparaherquamide, an indole 2,3-epoxidation-initiated pinacol-like rearrangement is catalyzed by the phqK FAD-dependent monooxygenase. The prenyltransferase phqA, the cytochrome P450 monooxygenase phqL, and the FAD-linked oxidoreductase phqH (or the cytochrome P450 monooxygenase phqM), are proposed to be involved in the formation of the pyran ring. The FAD-dependent monooxygenase phqK is likely responsible for generation of the spiro-oxindole, and the N-methylation is likely mediated by the phqN methyltransferase leading to the isolable natural product paraherquamide F. However, the order of these biosynthetic steps has still to be determined. In late-stage paraherquamide biosynthesis, the third P450 monooxygenase, phqO, is probably responsible for the C-14 hydroxylation, transforming paraherquamide F to paraherquamide G, and paraherquamide E to the final product paraherquamide A. The expansion from the 6-membered ring pyran (in paraherquamides F and G) to the 7-membered dioxepin ring (in paraherquamides A and E) represents a poorly understood but intriguing process that probably involves the 2-oxoglutarate-dependent dioxygenase phqC. Finally, the remaining members of the paraherquamide cluster, including phqI as well as phqM (or phqH), do not have a clearly prescribed role and appear to be redundant. The protein is Prenyltransferase phqJ of Penicillium fellutanum.